Consider the following 622-residue polypeptide: Probable potassium transport system protein Kup 1 (622 aa).

12 consecutive transmembrane segments (helical) span residues 11–31, 50–70, 101–121, 137–157, 168–188, 215–235, 247–267, 285–305, 337–357, 366–386, 393–413, and 419–439; these read LTLGAIGVVYGDIGTSVLYAV, ILSIFFWTLTIIVSLKYVTLV, VLLLVGIFGTCLFYGDGVITP, PAFNKFVIPLTLLVLFGLFWV, FFGPITVVWFACIAVLGVAQI, FIILGAVVLCVTGAEALYADL, WFAVVMPALTLNYFGQGALLL, ALLPLVGLATLATVIASQALI, IYLPFVNWGLFVTIVLAVMIF, AYGIAVCTDMLITTILTFFVI, PLWLCVAATSFFFVVDFAFWA, and LFDGGWFPLLIGGAIFILMIT.

This sequence belongs to the HAK/KUP transporter (TC 2.A.72) family.

Its subcellular location is the cell inner membrane. It catalyses the reaction K(+)(in) + H(+)(in) = K(+)(out) + H(+)(out). Functionally, transport of potassium into the cell. Likely operates as a K(+):H(+) symporter. The sequence is that of Probable potassium transport system protein Kup 1 from Albidiferax ferrireducens (strain ATCC BAA-621 / DSM 15236 / T118) (Rhodoferax ferrireducens).